The primary structure comprises 229 residues: Ras-related protein RabZ (229 aa).

The tract at residues 1–39 (MGCFHSREPTATGKTKKEEPTSAVKTNKEEKSSNYVSEP) is disordered. Gly2 carries the N-myristoyl glycine lipid modification. The S-palmitoyl cysteine moiety is linked to residue Cys3. A compositionally biased stretch (basic and acidic residues) spans 15-32 (TKKEEPTSAVKTNKEEKS). 57 to 64 (GDQATGKS) serves as a coordination point for GTP. Residues 79-88 (HKPSPIIIDC) carry the Effector region motif. GTP-binding positions include 106-110 (DTAGQ) and 164-167 (NKCD).

The protein belongs to the small GTPase superfamily. Rab family. Post-translationally, although this sequence lacks the C-terminal cysteine motifs subject to isoprenylation in other Rab proteins, it does have N-terminal myristoylation and S-palmitoylation sequence motifs.

The polypeptide is Ras-related protein RabZ (rabZ) (Dictyostelium discoideum (Social amoeba)).